Consider the following 856-residue polypeptide: Putative zinc protease C28F5.4 (856 aa).

A Zn(2+)-binding site is contributed by H71. E74 (proton acceptor) is an active-site residue. Zn(2+) contacts are provided by H75 and E152.

Belongs to the peptidase M16 family.

The protein is Putative zinc protease C28F5.4 of Caenorhabditis elegans.